We begin with the raw amino-acid sequence, 245 residues long: 3-deoxy-manno-octulosonate cytidylyltransferase (245 aa).

Belongs to the KdsB family.

Its subcellular location is the cytoplasm. The catalysed reaction is 3-deoxy-alpha-D-manno-oct-2-ulosonate + CTP = CMP-3-deoxy-beta-D-manno-octulosonate + diphosphate. The protein operates within nucleotide-sugar biosynthesis; CMP-3-deoxy-D-manno-octulosonate biosynthesis; CMP-3-deoxy-D-manno-octulosonate from 3-deoxy-D-manno-octulosonate and CTP: step 1/1. Its pathway is bacterial outer membrane biogenesis; lipopolysaccharide biosynthesis. Its function is as follows. Activates KDO (a required 8-carbon sugar) for incorporation into bacterial lipopolysaccharide in Gram-negative bacteria. This chain is 3-deoxy-manno-octulosonate cytidylyltransferase, found in Rhodopseudomonas palustris (strain BisB18).